We begin with the raw amino-acid sequence, 367 residues long: Dual specificity protein phosphatase 1 (367 aa).

The Rhodanese domain maps to 20–137 (GAAQCLLLDC…FSASCPELCS (118 aa)). In terms of domain architecture, Tyrosine-protein phosphatase spans 173 to 314 (GPVEILSFLY…LLQFESQVLA (142 aa)). C258 (phosphocysteine intermediate) is an active-site residue. Residues S359 and S364 each carry the phosphoserine; by MAPK1 and MAPK3 modification.

Belongs to the protein-tyrosine phosphatase family. Non-receptor class dual specificity subfamily. Post-translationally, phosphorylation at Ser-359 and Ser-364 by MAPK1/ERK2 and MAPK3/ERK1 reduces its rate of degradation. 'Lys-48'-linked polyubiquitinated by NEURL3, leading to proteasomal degradation.

It is found in the nucleus. The enzyme catalyses O-phospho-L-tyrosyl-[protein] + H2O = L-tyrosyl-[protein] + phosphate. The catalysed reaction is O-phospho-L-seryl-[protein] + H2O = L-seryl-[protein] + phosphate. It catalyses the reaction O-phospho-L-threonyl-[protein] + H2O = L-threonyl-[protein] + phosphate. Dual specificity phosphatase that dephosphorylates MAP kinase MAPK1/ERK2 on both 'Thr-183' and 'Tyr-185', regulating its activity during the meiotic cell cycle. In Mus musculus (Mouse), this protein is Dual specificity protein phosphatase 1.